A 1008-amino-acid polypeptide reads, in one-letter code: Chitin synthase C (1008 aa).

A disordered region spans residues 1-160; that stretch reads MIYEMMVMKR…GGRTIDPNNR (160 aa). Residues 10-19 show a composition bias toward low complexity; sequence RSANSRAQNN. Polar residues predominate over residues 34 to 45; sequence ESPSRPVSSLGN. Asparagine 312 is a glycosylation site (N-linked (GlcNAc...) asparagine). 5 consecutive transmembrane segments (helical) span residues 642-662, 682-702, 717-737, 755-775, and 787-807; these read FMQL…FYFI, IFVI…IISM, IIVY…LVVI, LFVN…YASF, and SAAY…YAFC. Asparagine 833 is a glycosylation site (N-linked (GlcNAc...) asparagine). The next 2 helical transmembrane spans lie at 887 to 907 and 910 to 930; these read MVSI…EVYG and AGGT…LALI. The N-linked (GlcNAc...) asparagine glycan is linked to asparagine 961.

This sequence belongs to the chitin synthase family. Class II subfamily.

It is found in the cell membrane. It catalyses the reaction [(1-&gt;4)-N-acetyl-beta-D-glucosaminyl](n) + UDP-N-acetyl-alpha-D-glucosamine = [(1-&gt;4)-N-acetyl-beta-D-glucosaminyl](n+1) + UDP + H(+). Its function is as follows. Polymerizes chitin, a structural polymer of the cell wall and septum, by transferring the sugar moiety of UDP-GlcNAc to the non-reducing end of the growing chitin polymer. Involved in cell wall integrity and mycelial morphology. Plays an important role in septal growth or maintenance. Acts as a positive regulator of conidiation, cellular responses to oxidative stresses, and the production of malic acid. Negatively regulates the citric acid production. In Aspergillus niger (strain ATCC MYA-4892 / CBS 513.88 / FGSC A1513), this protein is Chitin synthase C.